A 58-amino-acid polypeptide reads, in one-letter code: UPF0509 protein YciZ (58 aa).

It belongs to the UPF0509 family.

This Escherichia fergusonii (strain ATCC 35469 / DSM 13698 / CCUG 18766 / IAM 14443 / JCM 21226 / LMG 7866 / NBRC 102419 / NCTC 12128 / CDC 0568-73) protein is UPF0509 protein YciZ.